The primary structure comprises 168 residues: MSRWRPPAEKSTALITPEGHARLKAELDDLWRVRRPEVVRALAAAAAEGDRSENAEYTYRKKQLGEIDRRVRYLSKRLEALRVVDTAPTDANAVFFGAQVELEDAGSGELLRYRIVGPDETDAGRGWISIDSPLARALLKKRVDDEFDAHLPAGKHTFVVVSVDYASL.

The protein belongs to the GreA/GreB family. GreB subfamily.

Functionally, necessary for efficient RNA polymerase transcription elongation past template-encoded arresting sites. The arresting sites in DNA have the property of trapping a certain fraction of elongating RNA polymerases that pass through, resulting in locked ternary complexes. Cleavage of the nascent transcript by cleavage factors such as GreA or GreB allows the resumption of elongation from the new 3'terminus. GreB releases sequences of up to 9 nucleotides in length. This is Transcription elongation factor GreB from Xanthomonas axonopodis pv. citri (strain 306).